Here is a 416-residue protein sequence, read N- to C-terminus: Glutamyl-tRNA reductase (416 aa).

Substrate-binding positions include 49–52 (TCNR), S105, 110–112 (EPQ), and Q116. Catalysis depends on C50, which acts as the Nucleophile. 185–190 (GAGETI) contributes to the NADP(+) binding site.

This sequence belongs to the glutamyl-tRNA reductase family. Homodimer.

It catalyses the reaction (S)-4-amino-5-oxopentanoate + tRNA(Glu) + NADP(+) = L-glutamyl-tRNA(Glu) + NADPH + H(+). Its pathway is porphyrin-containing compound metabolism; protoporphyrin-IX biosynthesis; 5-aminolevulinate from L-glutamyl-tRNA(Glu): step 1/2. Its function is as follows. Catalyzes the NADPH-dependent reduction of glutamyl-tRNA(Glu) to glutamate 1-semialdehyde (GSA). The sequence is that of Glutamyl-tRNA reductase from Shewanella amazonensis (strain ATCC BAA-1098 / SB2B).